The sequence spans 568 residues: Protein adenylyltransferase SelO, mitochondrial (568 aa).

ATP is bound by residues glycine 120, glycine 122, arginine 123, lysine 144, aspartate 156, glycine 157, arginine 208, and arginine 215. Catalysis depends on aspartate 287, which acts as the Proton acceptor. The Mg(2+) site is built by asparagine 288 and aspartate 297. Aspartate 297 is a binding site for ATP.

Belongs to the SELO family. The cofactor is Mg(2+). Post-translationally, forms probably one or more intrachain disulfide bridges.

The protein localises to the mitochondrion. The catalysed reaction is L-tyrosyl-[protein] + ATP = O-(5'-adenylyl)-L-tyrosyl-[protein] + diphosphate. Catalyzes the transfer of adenosine 5'-monophosphate (AMP) to Tyr residues of target mitochondrial proteins (AMPylation). Involved in redox homeostasis by regulating the cellular response to oxidative stress. Regulates protein S-glutathionylation levels possibly by AMPylation of deglutathionylation enzymes such as glutaredoxins. The polypeptide is Protein adenylyltransferase SelO, mitochondrial (Schizosaccharomyces pombe (strain 972 / ATCC 24843) (Fission yeast)).